The primary structure comprises 431 residues: Glutamate-1-semialdehyde 2,1-aminomutase (431 aa).

N6-(pyridoxal phosphate)lysine is present on K269.

It belongs to the class-III pyridoxal-phosphate-dependent aminotransferase family. HemL subfamily. In terms of assembly, homodimer. Pyridoxal 5'-phosphate is required as a cofactor.

Its subcellular location is the cytoplasm. It catalyses the reaction (S)-4-amino-5-oxopentanoate = 5-aminolevulinate. The protein operates within porphyrin-containing compound metabolism; protoporphyrin-IX biosynthesis; 5-aminolevulinate from L-glutamyl-tRNA(Glu): step 2/2. The chain is Glutamate-1-semialdehyde 2,1-aminomutase from Francisella tularensis subsp. tularensis (strain SCHU S4 / Schu 4).